The sequence spans 264 residues: Thymidylate synthase (264 aa).

Arg-21 serves as a coordination point for dUMP. His-51 contacts (6R)-5,10-methylene-5,6,7,8-tetrahydrofolate. Arg-126–Arg-127 provides a ligand contact to dUMP. Cys-146 serves as the catalytic Nucleophile. DUMP contacts are provided by residues Arg-166 to Asp-169, Asn-177, and His-207 to Tyr-209. Asp-169 serves as a coordination point for (6R)-5,10-methylene-5,6,7,8-tetrahydrofolate. Ser-263 is a binding site for (6R)-5,10-methylene-5,6,7,8-tetrahydrofolate.

This sequence belongs to the thymidylate synthase family. Bacterial-type ThyA subfamily. As to quaternary structure, homodimer.

The protein resides in the cytoplasm. The catalysed reaction is dUMP + (6R)-5,10-methylene-5,6,7,8-tetrahydrofolate = 7,8-dihydrofolate + dTMP. The protein operates within pyrimidine metabolism; dTTP biosynthesis. In terms of biological role, catalyzes the reductive methylation of 2'-deoxyuridine-5'-monophosphate (dUMP) to 2'-deoxythymidine-5'-monophosphate (dTMP) while utilizing 5,10-methylenetetrahydrofolate (mTHF) as the methyl donor and reductant in the reaction, yielding dihydrofolate (DHF) as a by-product. This enzymatic reaction provides an intracellular de novo source of dTMP, an essential precursor for DNA biosynthesis. This is Thymidylate synthase from Phocaeicola vulgatus (strain ATCC 8482 / DSM 1447 / JCM 5826 / CCUG 4940 / NBRC 14291 / NCTC 11154) (Bacteroides vulgatus).